A 109-amino-acid chain; its full sequence is Hainantoxin-XVIII (109 aa).

Residues 1–18 form the signal peptide; that stretch reads MKLSIIIIATSLVIAVVA. Residues 19–46 constitute a propeptide that is removed on maturation; the sequence is FPSKDSKAIENDKTEQRMEIVVQETARA. 4 disulfide bridges follow: Cys47-Cys62, Cys55-Cys68, Cys59-Cys108, and Cys61-Cys81.

Belongs to the neurotoxin 25 family. F7 subfamily. Expressed by the venom gland.

It localises to the secreted. In terms of biological role, putative ion channel inhibitor. This Cyriopagopus hainanus (Chinese bird spider) protein is Hainantoxin-XVIII.